Here is a 447-residue protein sequence, read N- to C-terminus: Tubulin beta-2 chain (447 aa).

GTP is bound by residues Gln11, Glu69, Ser138, Gly142, Thr143, Gly144, Asn204, and Asn226. Residue Glu69 coordinates Mg(2+). The segment covering 419–428 (VSEYQQYQDA) has biased composition (polar residues). A disordered region spans residues 419–447 (VSEYQQYQDATSDEEGEYEDEDQEPEEDM). Residues 429–447 (TSDEEGEYEDEDQEPEEDM) show a composition bias toward acidic residues.

It belongs to the tubulin family. In terms of assembly, dimer of alpha and beta chains. A typical microtubule is a hollow water-filled tube with an outer diameter of 25 nm and an inner diameter of 15 nM. Alpha-beta heterodimers associate head-to-tail to form protofilaments running lengthwise along the microtubule wall with the beta-tubulin subunit facing the microtubule plus end conferring a structural polarity. Microtubules usually have 13 protofilaments but different protofilament numbers can be found in some organisms and specialized cells. Mg(2+) serves as cofactor.

The protein localises to the cytoplasm. Its subcellular location is the cytoskeleton. Functionally, tubulin is the major constituent of microtubules, a cylinder consisting of laterally associated linear protofilaments composed of alpha- and beta-tubulin heterodimers. Microtubules grow by the addition of GTP-tubulin dimers to the microtubule end, where a stabilizing cap forms. Below the cap, tubulin dimers are in GDP-bound state, owing to GTPase activity of alpha-tubulin. This is Tubulin beta-2 chain (TUBB2) from Triticum aestivum (Wheat).